The following is a 290-amino-acid chain: uncharacterized protein (290 aa).

This is an uncharacterized protein from Psittacid herpesvirus 1 (isolate Amazon parrot/-/97-0001/1997) (PsHV-1).